The sequence spans 568 residues: Urease subunit alpha (568 aa).

The region spanning 130 to 568 is the Urease domain; it reads GGIDTHIHFI…LPMAQRYFLF (439 aa). Ni(2+)-binding residues include histidine 135, histidine 137, and lysine 218. Residue lysine 218 is modified to N6-carboxylysine. Residue histidine 220 participates in substrate binding. Residues histidine 247 and histidine 273 each coordinate Ni(2+). The active-site Proton donor is the histidine 321. A Ni(2+)-binding site is contributed by aspartate 361.

Belongs to the metallo-dependent hydrolases superfamily. Urease alpha subunit family. In terms of assembly, heterotrimer of UreA (gamma), UreB (beta) and UreC (alpha) subunits. Three heterotrimers associate to form the active enzyme. Ni cation is required as a cofactor. In terms of processing, carboxylation allows a single lysine to coordinate two nickel ions.

It is found in the cytoplasm. It carries out the reaction urea + 2 H2O + H(+) = hydrogencarbonate + 2 NH4(+). Its pathway is nitrogen metabolism; urea degradation; CO(2) and NH(3) from urea (urease route): step 1/1. The polypeptide is Urease subunit alpha (Burkholderia pseudomallei (strain K96243)).